We begin with the raw amino-acid sequence, 464 residues long: Glutamyl-tRNA reductase (464 aa).

Substrate is bound by residues 47-50 (TCNR), Ser145, 150-152 (EPQ), and Gln156. The active-site Nucleophile is Cys48. 225 to 230 (AAGEMN) provides a ligand contact to NADP(+).

This sequence belongs to the glutamyl-tRNA reductase family. In terms of assembly, homodimer.

It carries out the reaction (S)-4-amino-5-oxopentanoate + tRNA(Glu) + NADP(+) = L-glutamyl-tRNA(Glu) + NADPH + H(+). It participates in porphyrin-containing compound metabolism; protoporphyrin-IX biosynthesis; 5-aminolevulinate from L-glutamyl-tRNA(Glu): step 1/2. Its function is as follows. Catalyzes the NADPH-dependent reduction of glutamyl-tRNA(Glu) to glutamate 1-semialdehyde (GSA). In Psychrobacter cryohalolentis (strain ATCC BAA-1226 / DSM 17306 / VKM B-2378 / K5), this protein is Glutamyl-tRNA reductase.